Here is a 450-residue protein sequence, read N- to C-terminus: uncharacterized protein (450 aa).

The protein belongs to the heat shock protein 70 family.

This is an uncharacterized protein from Escherichia coli (strain K12).